Consider the following 232-residue polypeptide: LRRN4 C-terminal-like protein (232 aa).

An N-terminal signal peptide occupies residues 1-22 (MPHSPCLLWLLAVTSLVPGTQP). Over 23 to 189 (LVAGDLEGDE…RLTVPPRPLT (167 aa)) the chain is Extracellular. A Fibronectin type-III domain is found at 77–172 (PPHPPRLGEV…GAEGLDSADG (96 aa)). N127 is a glycosylation site (N-linked (GlcNAc...) asparagine). A helical membrane pass occupies residues 190-210 (LLHAAMGVGSALALLSCSALV). Residues 211–232 (WHFCLRQRWGCPRRGRPSHAGL) are Cytoplasmic-facing.

The protein resides in the membrane. This chain is LRRN4 C-terminal-like protein (LRRN4CL), found in Bos taurus (Bovine).